Reading from the N-terminus, the 92-residue chain is CRISPR-associated endoribonuclease Cas2 3 (92 aa).

Mg(2+) is bound at residue aspartate 9.

It belongs to the CRISPR-associated endoribonuclease Cas2 protein family. In terms of assembly, homodimer, forms a heterotetramer with a Cas1 homodimer. Requires Mg(2+) as cofactor.

In terms of biological role, CRISPR (clustered regularly interspaced short palindromic repeat), is an adaptive immune system that provides protection against mobile genetic elements (viruses, transposable elements and conjugative plasmids). CRISPR clusters contain sequences complementary to antecedent mobile elements and target invading nucleic acids. CRISPR clusters are transcribed and processed into CRISPR RNA (crRNA). Functions as a ssRNA-specific endoribonuclease. Involved in the integration of spacer DNA into the CRISPR cassette. In Synechocystis sp. (strain ATCC 27184 / PCC 6803 / Kazusa), this protein is CRISPR-associated endoribonuclease Cas2 3.